Here is a 450-residue protein sequence, read N- to C-terminus: MGKYFGTDGVRGEANLELTPELAFKLGRFGGYVLSQHETEAPKVFVGRDTRISGEMLESALVAGLLSVGIHVYKLGVLATPAVAYLVETEGASAGVMISASHNPALDNGIKFFGGDGFKLDDEKEAEIEALLDAEEDTLPRPSAEGLGILVDYPEGLRKYEGYLVSTGTPLDGMKVALDTANGAASTSARQIFADLGAQLTVIGETPDGLNINLNVGSTHPEALQEVVKESGSAIGLAFDGDSDRLIAVDENGDIVDGDKIMYIIGKYLSEKGQLAQNTIVTTVMSNLGFHKALNREGINKAVTAVGDRYVVEEMRKSGYNLGGEQSGHVILMDYNTTGDGQLSAVQLTKIMKETGKSLSELAAEVTIYPQKLVNIRVENVMKEKAMEVPAIKAIIEKMEEEMAGNGRILVRPSGTEPLLRVMAEAPTTEEVNYYVDTITDVVRAEIGID.

The Phosphoserine intermediate role is filled by serine 101. Residues serine 101, aspartate 240, aspartate 242, and aspartate 244 each coordinate Mg(2+). Serine 101 carries the phosphoserine modification.

It belongs to the phosphohexose mutase family. It depends on Mg(2+) as a cofactor. Post-translationally, activated by phosphorylation.

The catalysed reaction is alpha-D-glucosamine 1-phosphate = D-glucosamine 6-phosphate. Catalyzes the conversion of glucosamine-6-phosphate to glucosamine-1-phosphate. The polypeptide is Phosphoglucosamine mutase (Streptococcus pneumoniae serotype 4 (strain ATCC BAA-334 / TIGR4)).